A 212-amino-acid chain; its full sequence is uncharacterized protein (212 aa).

3 Pentapeptide repeat domains span residues 63 to 102 (VSFRHIELTDVIFEKCDLSNADFSGAVIHRTSVKQSKMVG), 103 to 142 (MNVAEATLRNVSFEECHGHFSSFSYSNMKQVRFDHCALMQ), and 143 to 182 (SECSDTVLQQTHFDGCELEGASFTGTSLQNMDISTCRFEQ).

This is an uncharacterized protein from Bacillus subtilis (strain 168).